A 113-amino-acid chain; its full sequence is Iron-sulfur cluster insertion protein ErpA (113 aa).

Iron-sulfur cluster contacts are provided by cysteine 41, cysteine 105, and cysteine 107.

It belongs to the HesB/IscA family. In terms of assembly, homodimer. Requires iron-sulfur cluster as cofactor.

Functionally, required for insertion of 4Fe-4S clusters for at least IspG. This is Iron-sulfur cluster insertion protein ErpA from Colwellia psychrerythraea (strain 34H / ATCC BAA-681) (Vibrio psychroerythus).